The primary structure comprises 749 residues: Homeobox-leucine zipper protein ROC7 (749 aa).

The tract at residues 26-98 is disordered; that stretch reads LDQHQQHQHQ…KKRYHRHTQH (73 aa). Residues 46–57 show a composition bias toward basic and acidic residues; sequence SDGRAPRDELEM. Gly residues predominate over residues 68–78; that stretch reads SGGGGGGGGSG. A compositionally biased stretch (basic residues) spans 86–97; it reads RPRKKRYHRHTQ. The segment at residues 88 to 147 is a DNA-binding region (homeobox); the sequence is RKKRYHRHTQHQIQELEAFFKECPHPDDKQRKELSRELGLEPLQVKFWFQNKRTQMKTQH. A coiled-coil region spans residues 137–218; sequence QNKRTQMKTQ…DRISAIAAKY (82 aa). One can recognise an START domain in the interval 256-494; sequence ADFDKPLVIE…LERQCERLAS (239 aa).

It belongs to the HD-ZIP homeobox family. Class IV subfamily.

It is found in the nucleus. Probable transcription factor. This Oryza sativa subsp. indica (Rice) protein is Homeobox-leucine zipper protein ROC7 (ROC7).